A 172-amino-acid polypeptide reads, in one-letter code: Adenine phosphoribosyltransferase (172 aa).

The protein belongs to the purine/pyrimidine phosphoribosyltransferase family. Homodimer.

It localises to the cytoplasm. It carries out the reaction AMP + diphosphate = 5-phospho-alpha-D-ribose 1-diphosphate + adenine. It functions in the pathway purine metabolism; AMP biosynthesis via salvage pathway; AMP from adenine: step 1/1. Catalyzes a salvage reaction resulting in the formation of AMP, that is energically less costly than de novo synthesis. The protein is Adenine phosphoribosyltransferase of Trichormus variabilis (strain ATCC 29413 / PCC 7937) (Anabaena variabilis).